Here is a 255-residue protein sequence, read N- to C-terminus: Hydroxyacylglutathione hydrolase (255 aa).

Zn(2+) contacts are provided by His-53, His-55, Asp-57, His-58, His-110, Asp-127, and His-165.

This sequence belongs to the metallo-beta-lactamase superfamily. Glyoxalase II family. As to quaternary structure, monomer. Zn(2+) is required as a cofactor.

The enzyme catalyses an S-(2-hydroxyacyl)glutathione + H2O = a 2-hydroxy carboxylate + glutathione + H(+). Its pathway is secondary metabolite metabolism; methylglyoxal degradation; (R)-lactate from methylglyoxal: step 2/2. Functionally, thiolesterase that catalyzes the hydrolysis of S-D-lactoyl-glutathione to form glutathione and D-lactic acid. This chain is Hydroxyacylglutathione hydrolase, found in Xanthomonas oryzae pv. oryzae (strain MAFF 311018).